We begin with the raw amino-acid sequence, 456 residues long: Arginine biosynthesis bifunctional protein ArgJ, mitochondrial (456 aa).

Positions 184, 213, 224, 311, 451, and 456 each coordinate substrate. The active-site Nucleophile is Thr-224.

The protein belongs to the ArgJ family. In terms of assembly, heterodimer of an alpha and a beta chain. The alpha and beta chains are autoproteolytically processed from a single precursor protein within the mitochondrion.

Its subcellular location is the mitochondrion matrix. The catalysed reaction is N(2)-acetyl-L-ornithine + L-glutamate = N-acetyl-L-glutamate + L-ornithine. It carries out the reaction L-glutamate + acetyl-CoA = N-acetyl-L-glutamate + CoA + H(+). It functions in the pathway amino-acid biosynthesis; L-arginine biosynthesis; L-ornithine and N-acetyl-L-glutamate from L-glutamate and N(2)-acetyl-L-ornithine (cyclic): step 1/1. Its pathway is amino-acid biosynthesis; L-arginine biosynthesis; N(2)-acetyl-L-ornithine from L-glutamate: step 1/4. Catalyzes two activities which are involved in the cyclic version of arginine biosynthesis: the synthesis of acetylglutamate from glutamate and acetyl-CoA, and of ornithine by transacetylation between acetylornithine and glutamate. The polypeptide is Arginine biosynthesis bifunctional protein ArgJ, mitochondrial (Neosartorya fischeri (strain ATCC 1020 / DSM 3700 / CBS 544.65 / FGSC A1164 / JCM 1740 / NRRL 181 / WB 181) (Aspergillus fischerianus)).